We begin with the raw amino-acid sequence, 127 residues long: Large ribosomal subunit protein bL17 (127 aa).

Belongs to the bacterial ribosomal protein bL17 family. In terms of assembly, part of the 50S ribosomal subunit. Contacts protein L32.

This Xanthomonas euvesicatoria pv. vesicatoria (strain 85-10) (Xanthomonas campestris pv. vesicatoria) protein is Large ribosomal subunit protein bL17.